The sequence spans 255 residues: Ribosomal RNA small subunit methyltransferase A (255 aa).

S-adenosyl-L-methionine-binding residues include N12, L14, G39, E60, D84, and N106.

Belongs to the class I-like SAM-binding methyltransferase superfamily. rRNA adenine N(6)-methyltransferase family. RsmA subfamily.

The protein localises to the cytoplasm. The enzyme catalyses adenosine(1518)/adenosine(1519) in 16S rRNA + 4 S-adenosyl-L-methionine = N(6)-dimethyladenosine(1518)/N(6)-dimethyladenosine(1519) in 16S rRNA + 4 S-adenosyl-L-homocysteine + 4 H(+). Its function is as follows. Specifically dimethylates two adjacent adenosines (A1518 and A1519) in the loop of a conserved hairpin near the 3'-end of 16S rRNA in the 30S particle. May play a critical role in biogenesis of 30S subunits. The polypeptide is Ribosomal RNA small subunit methyltransferase A (Janthinobacterium sp. (strain Marseille) (Minibacterium massiliensis)).